We begin with the raw amino-acid sequence, 204 residues long: MKDKVSFPFSPDRPLCVPKLFTISAPAGAGKTTLVRMLAEEFPDSFQKTVSLTTRSPRPEEVHGVDYYFVSQEEFLKRLDSGDFLEWVALFGEYYGTSRLEIDKIWKSGKHAIAVIDVEGALALRSKIPTVTIFISAPSLEELERRLKHRGSEQDAQRQERLQHSLIEQAASSKFEYVIINDDLEKSYEILKSIFIAEEHRNVL.

The Guanylate kinase-like domain maps to 18–196 (PKLFTISAPA…SYEILKSIFI (179 aa)). 25-32 (APAGAGKT) lines the ATP pocket.

It belongs to the guanylate kinase family.

It is found in the cytoplasm. The enzyme catalyses GMP + ATP = GDP + ADP. Essential for recycling GMP and indirectly, cGMP. This Chlamydia felis (strain Fe/C-56) (Chlamydophila felis) protein is Guanylate kinase.